An 84-amino-acid chain; its full sequence is Cytoplasmic envelopment protein 3 (84 aa).

Residue G2 is the site of N-myristoyl glycine; by host attachment. An asp/Glu-rich (acidic) region spans residues 40 to 46 (DLDDLRC).

The protein belongs to the herpesviridae cytoplasmic envelopment protein 3 family. In terms of assembly, interacts with cytoplasmic envelopment protein 2; this interaction is essential for the proper localization of each protein to the assembly complex and thus for the production of infectious virus. In terms of processing, myristoylation and palmitoylation (probably on one or more of the nearby cysteines at the N-terminus) enable membrane-binding and Golgi apparatus-specific targeting and are essential for efficient packaging. Phosphorylated. Phosphorylation does not seem to be required for recycling to the host Golgi apparatus. Packaging is selective for underphosphorylated forms.

The protein localises to the virion tegument. The protein resides in the virion membrane. It is found in the host cell membrane. Its subcellular location is the host Golgi apparatus membrane. Its function is as follows. Plays an important role in the cytoplasmic envelopment of tegument proteins and capsids during the assembly and egress processes. Also participates in viral entry at the fusion step probably by regulating the core fusion machinery. This Gallus gallus (Chicken) protein is Cytoplasmic envelopment protein 3 (MDV023).